Consider the following 130-residue polypeptide: Calcitonin gene-related peptide 2 (130 aa).

The signal sequence occupies residues 1–26; sequence MDFWKFFPFLALSTIWVLCLASSLQA. Positions 27–82 are excised as a propeptide; the sequence is APFRSALESSLDLGTLGDQEKHLLLAALMQDYEQMKARKLEQEEQETKGSRVTAQK. Cys85 and Cys90 are joined by a disulfide. A Phenylalanine amide modification is found at Phe120. The propeptide occupies 127–130; sequence DLQA.

Belongs to the calcitonin family. In terms of tissue distribution, detected in nerve cells of cerebrum, hippocampus and pons/midbrain in newborns, and only in nerve cells of pons/midbrain in adult.

The protein localises to the secreted. Its function is as follows. CALCB/CGRP2 is a peptide hormone that induces vasodilation mediated by the CALCRL-RAMP1 receptor complex. Dilates a variety of vessels including the coronary, cerebral and systemic vasculature. Its abundance in the CNS also points toward a neurotransmitter or neuromodulator role. This Mus musculus (Mouse) protein is Calcitonin gene-related peptide 2.